We begin with the raw amino-acid sequence, 445 residues long: Methylenetetrahydrofolate--tRNA-(uracil-5-)-methyltransferase TrmFO (445 aa).

9–14 (GGGLAG) lines the FAD pocket.

The protein belongs to the MnmG family. TrmFO subfamily. FAD serves as cofactor.

The protein localises to the cytoplasm. It carries out the reaction uridine(54) in tRNA + (6R)-5,10-methylene-5,6,7,8-tetrahydrofolate + NADH + H(+) = 5-methyluridine(54) in tRNA + (6S)-5,6,7,8-tetrahydrofolate + NAD(+). It catalyses the reaction uridine(54) in tRNA + (6R)-5,10-methylene-5,6,7,8-tetrahydrofolate + NADPH + H(+) = 5-methyluridine(54) in tRNA + (6S)-5,6,7,8-tetrahydrofolate + NADP(+). In terms of biological role, catalyzes the folate-dependent formation of 5-methyl-uridine at position 54 (M-5-U54) in all tRNAs. This Aquifex aeolicus (strain VF5) protein is Methylenetetrahydrofolate--tRNA-(uracil-5-)-methyltransferase TrmFO.